Consider the following 527-residue polypeptide: Arginine--tRNA ligase (527 aa).

The short motif at 112–122 is the 'HIGH' region element; the sequence is ANPTGPLHIGH.

The protein belongs to the class-I aminoacyl-tRNA synthetase family. In terms of assembly, monomer.

Its subcellular location is the cytoplasm. The catalysed reaction is tRNA(Arg) + L-arginine + ATP = L-arginyl-tRNA(Arg) + AMP + diphosphate. This Nitratiruptor sp. (strain SB155-2) protein is Arginine--tRNA ligase.